A 617-amino-acid chain; its full sequence is Diacylglycerol O-acyltransferase 1 (617 aa).

Disordered regions lie at residues 1–52 (MEPI…ETER) and 95–186 (RNTN…PKQE). Residues 7–17 (SNGNKNNSMDK) are compositionally biased toward polar residues. Composition is skewed to low complexity over residues 18–34 (QPQQ…QQQQ) and 96–105 (NTNNNNQNNT). Residues 106–140 (SPTFSSANGKQSNLTQRKINTQIQSKQPTNNNVQP) show a composition bias toward polar residues. Residues 160–177 (QNNNGNNNNNNNNNNNNN) are compositionally biased toward low complexity. 5 helical membrane-spanning segments follow: residues 217 to 237 (LLLI…HLLY), 254 to 274 (WPGV…YLIE), 306 to 326 (IIAF…ICTF), 399 to 419 (IVEA…YMLP), and 449 to 469 (YVWL…VAEI). Positions 477 to 483 (FYRDWWN) match the FYXDWWN motif motif. Helical transmembrane passes span 520–540 (GYFM…SIPF), 545–565 (LWGF…KNLM), and 570–590 (LGNV…VLLY). Histidine 532 is a catalytic residue.

Belongs to the membrane-bound acyltransferase family. Sterol o-acyltransferase subfamily.

It is found in the endoplasmic reticulum membrane. It carries out the reaction an acyl-CoA + a 1,2-diacyl-sn-glycerol = a triacyl-sn-glycerol + CoA. The enzyme catalyses all-trans-retinol + an acyl-CoA = an all-trans-retinyl ester + CoA. It catalyses the reaction 2-(9Z-octadecenoyl)-glycerol + (9Z)-octadecenoyl-CoA = 1,2-di-(9Z-octadecenoyl)-sn-glycerol + CoA. The catalysed reaction is 1,2-di-(9Z-octadecenoyl)-sn-glycerol + (9Z)-octadecenoyl-CoA = 1,2,3-tri-(9Z-octadecenoyl)-glycerol + CoA. It carries out the reaction all-trans-retinol + hexadecanoyl-CoA = all-trans-retinyl hexadecanoate + CoA. The enzyme catalyses 1-O-(9Z-octadecenyl)-glycerol + (9Z)-octadecenoyl-CoA = 1-O-(9Z-octadecyl)-3-(9Z-octadecenoyl)-glycerol + CoA. It catalyses the reaction 1-O-(9Z-octadecyl)-3-(9Z-octadecenoyl)-glycerol + (9Z)-octadecenoyl-CoA = 1-O-(9Z-octadecenyl)-2,3-di-(9Z-octadecenoyl)glycerol + CoA. The catalysed reaction is 1-(9Z-octadecenoyl)-glycerol + (9Z)-octadecenoyl-CoA = 1,2-di-(9Z-octadecenoyl)-glycerol + CoA. It carries out the reaction 1,2-di-(9Z-octadecenoyl)-glycerol + (9Z)-octadecenoate + H(+) = 1,2,3-tri-(9Z-octadecenoyl)-glycerol + H2O. The enzyme catalyses 1-octadecanoyl-2-(5Z,8Z,11Z,14Z-eicosatetraenoyl)-sn-glycerol + (9Z)-octadecenoyl-CoA = 1-octadecanoyl-2-(5Z,8Z,11Z,14Z)-eicosatetraenoyl-3-(9Z)-octadecenoyl-sn-glycerol + CoA. It catalyses the reaction hexadecane-1,2-diol + 2 hexadecanoyl-CoA = 1,2-O,O-dihexadecanoyl-1,2-hexadecanediol + 2 CoA. The catalysed reaction is hexadecane-1,2-diol + hexadecanoyl-CoA = 2-hydroxyhexadecyl hexadecanoate + CoA. It carries out the reaction 2-(9Z-octadecenoyl)-glycerol + hexadecanoyl-CoA = 1-hexadecanoyl-2-(9Z-octadecenoyl)-sn-glycerol + CoA. The enzyme catalyses 1,2-di-(9Z-octadecenoyl)-sn-glycerol + hexadecanoyl-CoA = 1,2-di-(9Z)-octadecenoyl-3-hexadecanoyl-sn-glycerol + CoA. It catalyses the reaction hexadecan-1-ol + hexadecanoyl-CoA = hexadecanyl hexadecanoate + CoA. The catalysed reaction is 13-cis-retinol + hexadecanoyl-CoA = 13-cis-retinyl hexadecanoate + CoA. It carries out the reaction 1,3-di-(9Z-octadecenoyl)-glycerol + (9Z)-octadecenoyl-CoA = 1,2,3-tri-(9Z-octadecenoyl)-glycerol + CoA. The enzyme catalyses 2,3-di-(9Z)-octadecenoyl-sn-glycerol + (9Z)-octadecenoyl-CoA = 1,2,3-tri-(9Z-octadecenoyl)-glycerol + CoA. Its pathway is lipid metabolism; glycerolipid metabolism. Functionally, catalyzes the terminal and only committed step in triacylglycerol synthesis by using diacylglycerol and fatty acyl CoA as substrates. This Dictyostelium discoideum (Social amoeba) protein is Diacylglycerol O-acyltransferase 1 (dgat1).